A 304-amino-acid chain; its full sequence is Undecaprenyl-diphosphatase (304 aa).

8 consecutive transmembrane segments (helical) span residues 5-25 (FLFI…EFVP), 47-67 (GFPE…VVVL), 72-92 (ISSS…LKTS), 111-131 (FGIN…LFHD), 137-157 (LFST…LIVI), 209-231 (ISGL…AMVG), 248-268 (TNWI…LVVI), and 283-303 (FAIY…TKVI).

Belongs to the UppP family.

It is found in the cell membrane. It catalyses the reaction di-trans,octa-cis-undecaprenyl diphosphate + H2O = di-trans,octa-cis-undecaprenyl phosphate + phosphate + H(+). In terms of biological role, catalyzes the dephosphorylation of undecaprenyl diphosphate (UPP). Confers resistance to bacitracin. The chain is Undecaprenyl-diphosphatase from Clostridium perfringens (strain ATCC 13124 / DSM 756 / JCM 1290 / NCIMB 6125 / NCTC 8237 / Type A).